Here is a 244-residue protein sequence, read N- to C-terminus: Sepiapterin reductase (244 aa).

Residues 9–15 (GAGKGIG), 40–42 (SRT), 66–67 (DI), and Asn93 each bind NADP(+). Position 99 (Phe99) interacts with substrate. Thr116 contacts NADP(+). Residues Ser145 and Tyr158 each coordinate substrate. NADP(+) is bound by residues Tyr158, Lys162, and 191–196 (VYTPMW). Trp196 is a substrate binding site.

Belongs to the short-chain dehydrogenases/reductases (SDR) family. In terms of assembly, homodimer.

Its subcellular location is the cytoplasm. The enzyme catalyses L-threo-7,8-dihydrobiopterin + NADP(+) = L-sepiapterin + NADPH + H(+). It carries out the reaction L-threo-tetrahydrobiopterin + 2 NADP(+) = 6-pyruvoyl-5,6,7,8-tetrahydropterin + 2 NADPH + 2 H(+). Slightly inhibited by N-acetyldopamine but not by N-acetylserotonin or melatonin. Functionally, catalyzes the final reductions in tetra-hydrobiopterin biosynthesis to form 5,6,7,8-tetrahydrobiopterin. This chain is Sepiapterin reductase, found in Chlorobaculum tepidum (strain ATCC 49652 / DSM 12025 / NBRC 103806 / TLS) (Chlorobium tepidum).